The following is a 356-amino-acid chain: MGANVLIMAGGTGGHVFPALACAREFQARGYTVHWLGTPRGIENDLVPAAGLPLHLINVSGLRGKGKLSLLKAPFVLIKAVLQARRVIRQLKPVCVLGFGGYVTGPGGVAAKLSGVPVIVHEQNAVAGTANRLLVPLAARVCEAFPDTFGASQSRRTTGNPVRTELFLETPREALAGRKARLLILGGSLGAEPLNKLLPEALAQVAPELRPEVFHQAGKNHDEVTAERYRAAGVEAQVQPFIKDMAQAYGWADLVVCRAGALTVSELAAAGLPSMLVPLPHAIDDHQTRNAEYLAREGAAFLMPQRTTGAADLAARLTEVLMQPERLDNMAQAARRLAKPGATHDVVNICLEVAHG.

UDP-N-acetyl-alpha-D-glucosamine-binding positions include 12–14, Asn124, Arg163, Ser188, Ile242, 261–266, and Gln287; these read TGG and ALTVSE.

Belongs to the glycosyltransferase 28 family. MurG subfamily.

It localises to the cell inner membrane. It carries out the reaction di-trans,octa-cis-undecaprenyl diphospho-N-acetyl-alpha-D-muramoyl-L-alanyl-D-glutamyl-meso-2,6-diaminopimeloyl-D-alanyl-D-alanine + UDP-N-acetyl-alpha-D-glucosamine = di-trans,octa-cis-undecaprenyl diphospho-[N-acetyl-alpha-D-glucosaminyl-(1-&gt;4)]-N-acetyl-alpha-D-muramoyl-L-alanyl-D-glutamyl-meso-2,6-diaminopimeloyl-D-alanyl-D-alanine + UDP + H(+). The protein operates within cell wall biogenesis; peptidoglycan biosynthesis. In terms of biological role, cell wall formation. Catalyzes the transfer of a GlcNAc subunit on undecaprenyl-pyrophosphoryl-MurNAc-pentapeptide (lipid intermediate I) to form undecaprenyl-pyrophosphoryl-MurNAc-(pentapeptide)GlcNAc (lipid intermediate II). This Pseudomonas fluorescens (strain ATCC BAA-477 / NRRL B-23932 / Pf-5) protein is UDP-N-acetylglucosamine--N-acetylmuramyl-(pentapeptide) pyrophosphoryl-undecaprenol N-acetylglucosamine transferase.